The chain runs to 304 residues: UDP-N-acetylenolpyruvoylglucosamine reductase (304 aa).

The FAD-binding PCMH-type domain maps to 33-198 (IGGPADLLVM…LEVVLALQEG (166 aa)). The active site involves R177. Residue S227 is the Proton donor of the active site. The active site involves E297.

The protein belongs to the MurB family. FAD is required as a cofactor.

The protein resides in the cytoplasm. It carries out the reaction UDP-N-acetyl-alpha-D-muramate + NADP(+) = UDP-N-acetyl-3-O-(1-carboxyvinyl)-alpha-D-glucosamine + NADPH + H(+). It participates in cell wall biogenesis; peptidoglycan biosynthesis. Functionally, cell wall formation. This chain is UDP-N-acetylenolpyruvoylglucosamine reductase, found in Alkaliphilus metalliredigens (strain QYMF).